Consider the following 346-residue polypeptide: Methylthioribose-1-phosphate isomerase (346 aa).

Substrate contacts are provided by residues 54–56, R91, and Q192; that span reads RGA. The Proton donor role is filled by D233. 243–244 contacts substrate; sequence NK.

Belongs to the eIF-2B alpha/beta/delta subunits family. MtnA subfamily.

The enzyme catalyses 5-(methylsulfanyl)-alpha-D-ribose 1-phosphate = 5-(methylsulfanyl)-D-ribulose 1-phosphate. It participates in amino-acid biosynthesis; L-methionine biosynthesis via salvage pathway; L-methionine from S-methyl-5-thio-alpha-D-ribose 1-phosphate: step 1/6. In terms of biological role, catalyzes the interconversion of methylthioribose-1-phosphate (MTR-1-P) into methylthioribulose-1-phosphate (MTRu-1-P). This chain is Methylthioribose-1-phosphate isomerase, found in Yersinia enterocolitica serotype O:8 / biotype 1B (strain NCTC 13174 / 8081).